We begin with the raw amino-acid sequence, 297 residues long: CASP-like protein 2U8 (297 aa).

The Cytoplasmic segment spans residues M1–A10. The helical transmembrane segment at L11–L31 threads the bilayer. The Extracellular portion of the chain corresponds to N32–K64. Residues F65–M85 traverse the membrane as a helical segment. The Cytoplasmic segment spans residues A86 to M101. Residues A102–V122 traverse the membrane as a helical segment. Residues S123–C148 are Extracellular-facing. A helical transmembrane segment spans residues L149–A169. Residues S170–K297 are Cytoplasmic-facing.

It belongs to the Casparian strip membrane proteins (CASP) family. As to quaternary structure, homodimer and heterodimers.

It localises to the cell membrane. This chain is CASP-like protein 2U8, found in Selaginella moellendorffii (Spikemoss).